The chain runs to 92 residues: Large ribosomal subunit protein eL34 (92 aa).

It belongs to the eukaryotic ribosomal protein eL34 family.

This Staphylothermus marinus (strain ATCC 43588 / DSM 3639 / JCM 9404 / F1) protein is Large ribosomal subunit protein eL34.